Reading from the N-terminus, the 237-residue chain is MQIKTKAIVISSLKFQEKSLIVKCFTLSNGLKSYFVRDAFSSRKASQKIAYFQPLSILEIEAVHKNKGTLENFKEIKTAVPFQTIHTDIFKSTIVMFLSEMLHYSIQEEEKNEPLFVFLETALTWLDHHDDISNFHLILLLEITKYLGFYPDVSEIDLPYFEMKEGIFTLFHTSTALSEHETNLLKKLLDLKFDNSQKVFHVVERQILLRVLIDFYSAHLDGFKKPKSLDILKEIFS.

It belongs to the RecO family.

Its function is as follows. Involved in DNA repair and RecF pathway recombination. In Flavobacterium johnsoniae (strain ATCC 17061 / DSM 2064 / JCM 8514 / BCRC 14874 / CCUG 350202 / NBRC 14942 / NCIMB 11054 / UW101) (Cytophaga johnsonae), this protein is DNA repair protein RecO.